The chain runs to 331 residues: Holliday junction branch migration complex subunit RuvB (331 aa).

The tract at residues 1 to 186 (MAKTMMQDRL…FGIVQRLEFY (186 aa)) is large ATPase domain (RuvB-L). Residues Ile-25, Arg-26, Gly-67, Lys-70, Thr-71, Thr-72, 133–135 (EDF), Arg-176, Tyr-186, and Arg-223 each bind ATP. Thr-71 is a Mg(2+) binding site. A small ATPAse domain (RuvB-S) region spans residues 187–257 (NIADLTTIVS…IAGSALDMLA (71 aa)). The tract at residues 260 to 331 (RRGLDHLDRR…LTQMAIDQMV (72 aa)) is head domain (RuvB-H). Positions 296, 315, and 320 each coordinate DNA.

This sequence belongs to the RuvB family. Homohexamer. Forms an RuvA(8)-RuvB(12)-Holliday junction (HJ) complex. HJ DNA is sandwiched between 2 RuvA tetramers; dsDNA enters through RuvA and exits via RuvB. An RuvB hexamer assembles on each DNA strand where it exits the tetramer. Each RuvB hexamer is contacted by two RuvA subunits (via domain III) on 2 adjacent RuvB subunits; this complex drives branch migration. In the full resolvosome a probable DNA-RuvA(4)-RuvB(12)-RuvC(2) complex forms which resolves the HJ.

It localises to the cytoplasm. It carries out the reaction ATP + H2O = ADP + phosphate + H(+). The RuvA-RuvB-RuvC complex processes Holliday junction (HJ) DNA during genetic recombination and DNA repair, while the RuvA-RuvB complex plays an important role in the rescue of blocked DNA replication forks via replication fork reversal (RFR). RuvA specifically binds to HJ cruciform DNA, conferring on it an open structure. The RuvB hexamer acts as an ATP-dependent pump, pulling dsDNA into and through the RuvAB complex. RuvB forms 2 homohexamers on either side of HJ DNA bound by 1 or 2 RuvA tetramers; 4 subunits per hexamer contact DNA at a time. Coordinated motions by a converter formed by DNA-disengaged RuvB subunits stimulates ATP hydrolysis and nucleotide exchange. Immobilization of the converter enables RuvB to convert the ATP-contained energy into a lever motion, pulling 2 nucleotides of DNA out of the RuvA tetramer per ATP hydrolyzed, thus driving DNA branch migration. The RuvB motors rotate together with the DNA substrate, which together with the progressing nucleotide cycle form the mechanistic basis for DNA recombination by continuous HJ branch migration. Branch migration allows RuvC to scan DNA until it finds its consensus sequence, where it cleaves and resolves cruciform DNA. The sequence is that of Holliday junction branch migration complex subunit RuvB from Psychrobacter arcticus (strain DSM 17307 / VKM B-2377 / 273-4).